We begin with the raw amino-acid sequence, 608 residues long: UvrABC system protein C (608 aa).

The GIY-YIG domain maps to 15 to 93 (HQPGVYRMYN…IKQYLPKYNV (79 aa)). Positions 203–238 (RQVIQTLVKQMESASQSLNFEKAAIIRDQIQAMRRV) constitute a UVR domain.

This sequence belongs to the UvrC family. Interacts with UvrB in an incision complex.

It is found in the cytoplasm. In terms of biological role, the UvrABC repair system catalyzes the recognition and processing of DNA lesions. UvrC both incises the 5' and 3' sides of the lesion. The N-terminal half is responsible for the 3' incision and the C-terminal half is responsible for the 5' incision. The protein is UvrABC system protein C of Aliivibrio fischeri (strain ATCC 700601 / ES114) (Vibrio fischeri).